The primary structure comprises 506 residues: Anaerobic nitric oxide reductase transcription regulator NorR (506 aa).

Asp-57 is modified (4-aspartylphosphate). Positions 187-416 constitute a Sigma-54 factor interaction domain; the sequence is MIGLSPAMTQ…LEHAIHRAVV (230 aa). ATP contacts are provided by residues 215 to 222 and 278 to 287; these read GETGTGKE and ADNGTLFLDE. The segment at residues 481–500 is a DNA-binding region (H-T-H motif); it reads WAASARALETDVANLHRLAK.

The protein operates within nitrogen metabolism; nitric oxide reduction. In terms of biological role, required for the expression of anaerobic nitric oxide (NO) reductase, acts as a transcriptional activator for at least the norVW operon. Activation also requires sigma-54. This Salmonella gallinarum (strain 287/91 / NCTC 13346) protein is Anaerobic nitric oxide reductase transcription regulator NorR.